We begin with the raw amino-acid sequence, 407 residues long: Tyrosine--tRNA ligase (407 aa).

Tyr35 provides a ligand contact to L-tyrosine. Residues 40–49 (PTADSLHVGH) carry the 'HIGH' region motif. The L-tyrosine site is built by Tyr168 and Gln172. The short motif at 228–232 (KMGKT) is the 'KMSKS' region element. Residue Lys231 coordinates ATP. Residues 341–405 (NLLVDLLVKC…RGKKNFNRIV (65 aa)) enclose the S4 RNA-binding domain.

The protein belongs to the class-I aminoacyl-tRNA synthetase family. TyrS type 1 subfamily. Homodimer.

The protein localises to the cytoplasm. The catalysed reaction is tRNA(Tyr) + L-tyrosine + ATP = L-tyrosyl-tRNA(Tyr) + AMP + diphosphate + H(+). Catalyzes the attachment of tyrosine to tRNA(Tyr) in a two-step reaction: tyrosine is first activated by ATP to form Tyr-AMP and then transferred to the acceptor end of tRNA(Tyr). This Clostridium botulinum (strain Kyoto / Type A2) protein is Tyrosine--tRNA ligase.